Reading from the N-terminus, the 105-residue chain is Ig lambda chain C region (105 aa).

In terms of domain architecture, Ig-like spans 6–100 (PSVILFPPSS…EGHTVEKSLA (95 aa)). A disulfide bridge links Cys-27 with Cys-86.

The chain is Ig lambda chain C region from Oryctolagus cuniculus (Rabbit).